A 239-amino-acid polypeptide reads, in one-letter code: Cell number regulator 6 (239 aa).

Positions 1 to 10 (MAEDATSSHP) are enriched in polar residues. Residues 1 to 33 (MAEDATSSHPSRYVKLTKDQDAPAEDIRPGELN) form a disordered region. Positions 16-29 (LTKDQDAPAEDIRP) are enriched in basic and acidic residues. 2 consecutive transmembrane segments (helical) span residues 107 to 127 (CVCH…TAIF) and 136 to 156 (FLIG…TGIF).

The protein belongs to the cornifelin family. Expressed in roots, leaves, stalks, apical meristems, immature ears, endosperm, pericarp and tassel spikelets.

The protein resides in the membrane. This Zea mays (Maize) protein is Cell number regulator 6 (CNR6).